Consider the following 500-residue polypeptide: Ent-kaurene oxidase P450-4 (500 aa).

Residues 6–26 traverse the membrane as a helical segment; that stretch reads VHWLIYVAFGAWLCSYVIHVL. An N-linked (GlcNAc...) asparagine glycan is attached at asparagine 240. Cysteine 441 contacts heme. Asparagine 475 carries N-linked (GlcNAc...) asparagine glycosylation.

Belongs to the cytochrome P450 family. Heme is required as a cofactor.

The protein localises to the membrane. It catalyses the reaction ent-kaur-16-ene + 3 reduced [NADPH--hemoprotein reductase] + 3 O2 = ent-kaur-16-en-19-oate + 3 oxidized [NADPH--hemoprotein reductase] + 4 H2O + 4 H(+). Its pathway is plant hormone biosynthesis; gibberellin biosynthesis. Functionally, ent-kaurene oxidase; part of the gene cluster that mediates the biosynthesis of gibberellins (GAs), diterpenoids that may provide a selective advantage during infection of the preferred host plant, rice. Gibberellins (GAs) are diterpenoids and are synthesized via the mevalonate pathway. Biosynthesis of the major metabolite GA3 (gibberellic acid) from geranylgeranyl diphosphate (GGPP) requires 13 steps. The GGPP produced by the geranylgeranyl diphosphate synthase GGS2 is converted to ent-kaurene via ent-copalyldiphosphate in a two-step cyclization reaction performed by the bifunctional ent-copalyl diphosphate synthase/ent-kaurene synthase enzyme (CPS/KS). Ent-Kaurene is metabolized to GAs by a series of oxidation reactions catalyzed by cytochrome P450 monooxygenases. Cytochrome P450 monooxygenase P450-4 is an ent-kaurene oxidase that catalyzes the three oxidation steps between ent-kaurene and ent-kaurenoic acid. The highly multifunctional cytochrome P450 monooxygenase P450-1 then catalyzes four steps involving oxidation at two carbon atoms, in the main pathway from ent-kaurenoic acid to GA14 via GA12-aldehyde as well as producing kaurenolides and fujenoic acids as by-products. The cytochrome P450 monooxygenase P450-2 then converts GA14 to GA4 by removal of C-20. GA4 is further converted to GA7 by the GA4 desaturase DES via 1,2-desaturation before cytochrome P450 monooxygenase P450-3, a 13-hydroxylase, hydroxylates GA7 to GA3, the final product of the GA-biosynthetic pathway. In Gibberella fujikuroi (strain CBS 195.34 / IMI 58289 / NRRL A-6831) (Bakanae and foot rot disease fungus), this protein is Ent-kaurene oxidase P450-4.